Reading from the N-terminus, the 499-residue chain is Probable inactive receptor-like protein kinase At3g56050 (499 aa).

Residues 1–31 form the signal peptide; the sequence is MSNNWKSVRLRLQNRTLVFLLVILSFGSCYS. A glycan (N-linked (GlcNAc...) asparagine) is linked at Asn14. Residues 32 to 146 are Extracellular-facing; sequence LKSQGDGFLE…SKTSSNSTIP (115 aa). A disordered region spans residues 80–121; it reads RDRPVARATPPSSSVSTRPDAKRSSTLPPPQKSPPAQHVSAP. Residue Asn142 is glycosylated (N-linked (GlcNAc...) asparagine). The chain crosses the membrane as a helical span at residues 147–167; sequence IVAGCIAGAVFILLLATGVFF. The Cytoplasmic portion of the chain corresponds to 168-499; the sequence is FKSKAGKSVN…WAELEVLSTA (332 aa). The Protein kinase domain occupies 208 to 474; the sequence is EDFSNVIGSC…EVTGRLREIT (267 aa).

Its subcellular location is the cell membrane. In Arabidopsis thaliana (Mouse-ear cress), this protein is Probable inactive receptor-like protein kinase At3g56050.